The following is a 239-amino-acid chain: Uridylate kinase (239 aa).

Position 12–15 (12–15) interacts with ATP; the sequence is KLSG. Gly54 contributes to the UMP binding site. Residues Gly55 and Arg59 each coordinate ATP. UMP-binding positions include Asp74 and 135–142; that span reads TGNPYFTT. Thr162, Tyr168, and Asp171 together coordinate ATP.

The protein belongs to the UMP kinase family. In terms of assembly, homohexamer.

Its subcellular location is the cytoplasm. It carries out the reaction UMP + ATP = UDP + ADP. It functions in the pathway pyrimidine metabolism; CTP biosynthesis via de novo pathway; UDP from UMP (UMPK route): step 1/1. With respect to regulation, inhibited by UTP. Catalyzes the reversible phosphorylation of UMP to UDP. The sequence is that of Uridylate kinase from Fusobacterium nucleatum subsp. nucleatum (strain ATCC 25586 / DSM 15643 / BCRC 10681 / CIP 101130 / JCM 8532 / KCTC 2640 / LMG 13131 / VPI 4355).